The sequence spans 142 residues: Large ribosomal subunit protein uL11 (142 aa).

Belongs to the universal ribosomal protein uL11 family. In terms of assembly, part of the ribosomal stalk of the 50S ribosomal subunit. Interacts with L10 and the large rRNA to form the base of the stalk. L10 forms an elongated spine to which L12 dimers bind in a sequential fashion forming a multimeric L10(L12)X complex. In terms of processing, one or more lysine residues are methylated.

Its function is as follows. Forms part of the ribosomal stalk which helps the ribosome interact with GTP-bound translation factors. In Pectobacterium atrosepticum (strain SCRI 1043 / ATCC BAA-672) (Erwinia carotovora subsp. atroseptica), this protein is Large ribosomal subunit protein uL11.